Reading from the N-terminus, the 306-residue chain is Pantothenate kinase (306 aa).

Glycine 91 to serine 98 serves as a coordination point for ATP.

Belongs to the prokaryotic pantothenate kinase family.

Its subcellular location is the cytoplasm. The catalysed reaction is (R)-pantothenate + ATP = (R)-4'-phosphopantothenate + ADP + H(+). The protein operates within cofactor biosynthesis; coenzyme A biosynthesis; CoA from (R)-pantothenate: step 1/5. This is Pantothenate kinase (coaA) from Streptococcus pyogenes serotype M1.